Here is a 629-residue protein sequence, read N- to C-terminus: Glutamyl-tRNA(Gln) amidotransferase subunit E (629 aa).

The tract at residues 405–426 (PEETRRALPDGNTQYMRPLPGK) is disordered.

It belongs to the GatB/GatE family. GatE subfamily. In terms of assembly, heterodimer of GatD and GatE.

It catalyses the reaction L-glutamyl-tRNA(Gln) + L-glutamine + ATP + H2O = L-glutaminyl-tRNA(Gln) + L-glutamate + ADP + phosphate + H(+). Its function is as follows. Allows the formation of correctly charged Gln-tRNA(Gln) through the transamidation of misacylated Glu-tRNA(Gln) in organisms which lack glutaminyl-tRNA synthetase. The reaction takes place in the presence of glutamine and ATP through an activated gamma-phospho-Glu-tRNA(Gln). The GatDE system is specific for glutamate and does not act on aspartate. The polypeptide is Glutamyl-tRNA(Gln) amidotransferase subunit E (Thermococcus sibiricus (strain DSM 12597 / MM 739)).